Reading from the N-terminus, the 442-residue chain is Adenylosuccinate synthetase (442 aa).

GTP is bound by residues 25 to 31, 53 to 55, and lysine 62; these read GDEGKGK and GHT. The Proton acceptor role is filled by aspartate 26. The Mg(2+) site is built by aspartate 26 and glycine 53. Residues 26–29 and 51–54 contribute to the IMP site; these read DEGK and NAGH. Catalysis depends on histidine 54, which acts as the Proton donor. IMP is bound by residues threonine 141, arginine 155, asparagine 232, and threonine 247. Residue threonine 307 coordinates GTP. Substrate is bound at residue 307 to 313; it reads TTTKRPR. Arginine 311 contacts IMP. Residues arginine 313, 339–341, and 425–427 each bind GTP; these read KLD and GVG.

This sequence belongs to the adenylosuccinate synthetase family. In terms of assembly, homodimer. The cofactor is Mg(2+).

The protein resides in the cytoplasm. The catalysed reaction is IMP + L-aspartate + GTP = N(6)-(1,2-dicarboxyethyl)-AMP + GDP + phosphate + 2 H(+). It functions in the pathway purine metabolism; AMP biosynthesis via de novo pathway; AMP from IMP: step 1/2. Functionally, plays an important role in the salvage pathway for purine nucleotide biosynthesis. Catalyzes the first committed step in the biosynthesis of AMP from IMP. The polypeptide is Adenylosuccinate synthetase (Adss) (Plasmodium falciparum (isolate 3D7)).